Consider the following 159-residue polypeptide: MRESVINVLFYLFDDILTEQDGQEADLNQMAHWLSEAGFAHEDVGRAMDWFCELGKIGDYQPIIQTNPAVRIFSPQEAYFIDEEGQDFLRGLCRAGVLDTQLQETVIERAIALEEPLSLETLHWVVMMVIMNTGASETVWERKWSQIWLVDDDDHSVMQ.

The protein belongs to the Smg family.

The polypeptide is Protein Smg homolog (Dichelobacter nodosus (strain VCS1703A)).